The chain runs to 72 residues: MSKEELIEFEGTVVELLPNATFRVKLENDHEIIAHTAGKMRKNRIRVLTGDKVMVEMTPYDLTKGRITYRFK.

Residues 1–72 enclose the S1-like domain; that stretch reads MSKEELIEFE…TKGRITYRFK (72 aa).

This sequence belongs to the IF-1 family. As to quaternary structure, component of the 30S ribosomal translation pre-initiation complex which assembles on the 30S ribosome in the order IF-2 and IF-3, IF-1 and N-formylmethionyl-tRNA(fMet); mRNA recruitment can occur at any time during PIC assembly.

The protein localises to the cytoplasm. In terms of biological role, one of the essential components for the initiation of protein synthesis. Stabilizes the binding of IF-2 and IF-3 on the 30S subunit to which N-formylmethionyl-tRNA(fMet) subsequently binds. Helps modulate mRNA selection, yielding the 30S pre-initiation complex (PIC). Upon addition of the 50S ribosomal subunit IF-1, IF-2 and IF-3 are released leaving the mature 70S translation initiation complex. The sequence is that of Translation initiation factor IF-1 from Hyphomonas neptunium (strain ATCC 15444).